A 250-amino-acid polypeptide reads, in one-letter code: Aminoglycoside 3'-phosphotransferase (250 aa).

Asp178 acts as the Proton acceptor in catalysis.

The protein belongs to the aminoglycoside phosphotransferase family.

The enzyme catalyses kanamycin A + ATP = kanamycin 3'-phosphate + ADP + H(+). Functionally, resistance to kanamycin and structurally-related aminoglycosides, including amikacin. The sequence is that of Aminoglycoside 3'-phosphotransferase (aphA-7) from Campylobacter jejuni.